The following is a 367-amino-acid chain: Peptide chain release factor 2 (367 aa).

Q247 carries the post-translational modification N5-methylglutamine.

This sequence belongs to the prokaryotic/mitochondrial release factor family. In terms of processing, methylated by PrmC. Methylation increases the termination efficiency of RF2.

The protein resides in the cytoplasm. Functionally, peptide chain release factor 2 directs the termination of translation in response to the peptide chain termination codons UGA and UAA. The chain is Peptide chain release factor 2 from Caulobacter sp. (strain K31).